The chain runs to 359 residues: Palmitoyltransferase PFA5 (359 aa).

4 helical membrane passes run 10 to 30, 47 to 67, 164 to 184, and 206 to 226; these read WWYS…AIAY, AAAI…WIIW, LFNQ…VSVV, and LVVL…FISF. One can recognise a DHHC domain in the interval 120–170; that stretch reads VWCSVCQSLKGLRTHHSVHLGFCVPRLDHYCVWLGTVIGRRNYRLFNQFLM.

It belongs to the DHHC palmitoyltransferase family. PFA5 subfamily. Post-translationally, autopalmitoylated.

The protein resides in the membrane. It catalyses the reaction L-cysteinyl-[protein] + hexadecanoyl-CoA = S-hexadecanoyl-L-cysteinyl-[protein] + CoA. In Eremothecium gossypii (strain ATCC 10895 / CBS 109.51 / FGSC 9923 / NRRL Y-1056) (Yeast), this protein is Palmitoyltransferase PFA5 (PFA5).